Reading from the N-terminus, the 194-residue chain is uncharacterized protein (194 aa).

The protein belongs to the mimivirus R457/R459 family.

The protein resides in the virion. This is an uncharacterized protein from Acanthamoeba polyphaga mimivirus (APMV).